A 254-amino-acid chain; its full sequence is Zinc transporter GufA (254 aa).

Helical transmembrane passes span 4-24 (GLVA…PVLV), 74-94 (VAAG…LMPH), 112-132 (ALLF…AVGV), 143-163 (LSVA…VALA), 176-196 (FLAL…VLAL), 198-218 (LSSA…LYVI), and 234-254 (EATT…MSLG). Zn(2+) contacts are provided by N123, E126, Q152, N153, E156, and E185.

It belongs to the ZIP transporter (TC 2.A.5) family. In terms of assembly, homodimer.

Its subcellular location is the cell inner membrane. Its function is as follows. Mediates the uptake of Zn(2+). This Myxococcus xanthus protein is Zinc transporter GufA (gufA).